The sequence spans 155 residues: MKTYSAKPSEIEKKWWVIDAKNIVLGRLASRVANMLRGKHKPSFTPHLDCGDNIIIINAEHVKLTGKKANPKDGKIYYRYTGFPGGIKDTTAGKILSGKHPERVIKMAVKRMITRNALGAKQMSNLYVYANGDHPHMAQQPTVYDFASQNPKNKK.

This sequence belongs to the universal ribosomal protein uL13 family. Part of the 50S ribosomal subunit.

Functionally, this protein is one of the early assembly proteins of the 50S ribosomal subunit, although it is not seen to bind rRNA by itself. It is important during the early stages of 50S assembly. This Rickettsia conorii (strain ATCC VR-613 / Malish 7) protein is Large ribosomal subunit protein uL13.